We begin with the raw amino-acid sequence, 419 residues long: Squalene synthase R6 (419 aa).

A helical membrane pass occupies residues 397–417 (TMYLVVLLLGILGVAAAVLMA).

Belongs to the phytoene/squalene synthase family. It depends on Mg(2+) as a cofactor.

The protein localises to the membrane. The enzyme catalyses 2 (2E,6E)-farnesyl diphosphate + NADPH + H(+) = squalene + 2 diphosphate + NADP(+). It carries out the reaction 2 (2E,6E)-farnesyl diphosphate + NADH + H(+) = squalene + 2 diphosphate + NAD(+). The protein operates within terpene metabolism; lanosterol biosynthesis; lanosterol from farnesyl diphosphate: step 1/3. Its function is as follows. Squalene synthase; part of the gene cluster that mediates the biosynthesis of squalestatin S1 (SQS1, also known as zaragozic acid A), a heavily oxidized fungal polyketide that offers potent cholesterol lowering activity by targeting squalene synthase (SS). Catalyzes the condensation of 2 two farnesyl pyrophosphate moieties to form squalene. The presence of a gene encoding a squalene synthase supports the identification of the cluster as being responsible for SQS1 production and suggests a likely mechanism for self-resistance. The chain is Squalene synthase R6 from Phoma sp. (strain ATCC 20986 / MF5453).